The sequence spans 447 residues: Asparagine--tRNA ligase (447 aa).

Belongs to the class-II aminoacyl-tRNA synthetase family. As to quaternary structure, homodimer.

The protein resides in the cytoplasm. It catalyses the reaction tRNA(Asn) + L-asparagine + ATP = L-asparaginyl-tRNA(Asn) + AMP + diphosphate + H(+). This is Asparagine--tRNA ligase from Streptococcus pneumoniae (strain ATCC BAA-255 / R6).